The primary structure comprises 160 residues: uncharacterized protein (160 aa).

An N-terminal signal peptide occupies residues 1 to 29; sequence MTGKTHIMGGIASCTAAAYYYGFDPVLMA. 2 helical membrane-spanning segments follow: residues 67–87 and 137–157; these read TFTH…TYIP and QLVL…LFHG.

It to E.coli YdjM.

The protein localises to the cell membrane. This is an uncharacterized protein from Bacillus subtilis (strain 168).